The sequence spans 370 residues: Histidinol-phosphate aminotransferase (370 aa).

Lys-223 is modified (N6-(pyridoxal phosphate)lysine).

The protein belongs to the class-II pyridoxal-phosphate-dependent aminotransferase family. Histidinol-phosphate aminotransferase subfamily. In terms of assembly, homodimer. Requires pyridoxal 5'-phosphate as cofactor.

The enzyme catalyses L-histidinol phosphate + 2-oxoglutarate = 3-(imidazol-4-yl)-2-oxopropyl phosphate + L-glutamate. It participates in amino-acid biosynthesis; L-histidine biosynthesis; L-histidine from 5-phospho-alpha-D-ribose 1-diphosphate: step 7/9. The polypeptide is Histidinol-phosphate aminotransferase (Methylobacterium sp. (strain 4-46)).